Consider the following 216-residue polypeptide: Imidazole glycerol phosphate synthase subunit HisH (216 aa).

One can recognise a Glutamine amidotransferase type-1 domain in the interval 2-216; it reads SVAIVDYGSG…LISNFLKWKP (215 aa). The active-site Nucleophile is cysteine 88. Active-site residues include histidine 196 and glutamate 198.

As to quaternary structure, heterodimer of HisH and HisF.

The protein localises to the cytoplasm. It carries out the reaction 5-[(5-phospho-1-deoxy-D-ribulos-1-ylimino)methylamino]-1-(5-phospho-beta-D-ribosyl)imidazole-4-carboxamide + L-glutamine = D-erythro-1-(imidazol-4-yl)glycerol 3-phosphate + 5-amino-1-(5-phospho-beta-D-ribosyl)imidazole-4-carboxamide + L-glutamate + H(+). It catalyses the reaction L-glutamine + H2O = L-glutamate + NH4(+). It functions in the pathway amino-acid biosynthesis; L-histidine biosynthesis; L-histidine from 5-phospho-alpha-D-ribose 1-diphosphate: step 5/9. IGPS catalyzes the conversion of PRFAR and glutamine to IGP, AICAR and glutamate. The HisH subunit catalyzes the hydrolysis of glutamine to glutamate and ammonia as part of the synthesis of IGP and AICAR. The resulting ammonia molecule is channeled to the active site of HisF. This chain is Imidazole glycerol phosphate synthase subunit HisH, found in Rhodopseudomonas palustris (strain ATCC BAA-98 / CGA009).